The primary structure comprises 277 residues: 4-hydroxy-tetrahydrodipicolinate reductase (277 aa).

NAD(+) is bound by residues 11–16 and 110–112; these read GALGRM and GTT. H166 functions as the Proton donor/acceptor in the catalytic mechanism. H167 is a (S)-2,3,4,5-tetrahydrodipicolinate binding site. K170 functions as the Proton donor in the catalytic mechanism. (S)-2,3,4,5-tetrahydrodipicolinate is bound at residue 176-177; that stretch reads GT.

The protein belongs to the DapB family.

The protein localises to the cytoplasm. The catalysed reaction is (S)-2,3,4,5-tetrahydrodipicolinate + NAD(+) + H2O = (2S,4S)-4-hydroxy-2,3,4,5-tetrahydrodipicolinate + NADH + H(+). It carries out the reaction (S)-2,3,4,5-tetrahydrodipicolinate + NADP(+) + H2O = (2S,4S)-4-hydroxy-2,3,4,5-tetrahydrodipicolinate + NADPH + H(+). It functions in the pathway amino-acid biosynthesis; L-lysine biosynthesis via DAP pathway; (S)-tetrahydrodipicolinate from L-aspartate: step 4/4. In terms of biological role, catalyzes the conversion of 4-hydroxy-tetrahydrodipicolinate (HTPA) to tetrahydrodipicolinate. In Synechococcus sp. (strain CC9902), this protein is 4-hydroxy-tetrahydrodipicolinate reductase.